The primary structure comprises 665 residues: Cysteine-rich receptor-like protein kinase 41 (665 aa).

The first 27 residues, 1–27 (MTSSCSLSRPQHLFFFFFLFVPFLSLG), serve as a signal peptide directing secretion. Residues 28–280 (QQISVDINSA…DPKPGNDKVK (253 aa)) lie on the Extracellular side of the membrane. Gnk2-homologous domains lie at 42 to 148 (PSNP…DKPI) and 154 to 260 (TSPV…SDLR). N-linked (GlcNAc...) asparagine glycosylation is found at asparagine 120, asparagine 165, and asparagine 236. A helical transmembrane segment spans residues 281 to 301 (IIIATVCSVIGFAIIAVFLYF). The Cytoplasmic segment spans residues 302-665 (FMTRNRRTAK…DVTITEFDAR (364 aa)). Residues 344-624 (FSRDNQLGEG…VVMLNANSFT (281 aa)) form the Protein kinase domain. ATP-binding positions include 350-358 (LGEGGFGAV) and lysine 372. Position 417 is a phosphotyrosine (tyrosine 417). The active-site Proton acceptor is aspartate 469. Phosphoserine is present on serine 473. Threonine 511 carries the post-translational modification Phosphothreonine. Tyrosine 519 carries the post-translational modification Phosphotyrosine.

Belongs to the protein kinase superfamily. Ser/Thr protein kinase family. CRK subfamily.

The protein resides in the membrane. The enzyme catalyses L-seryl-[protein] + ATP = O-phospho-L-seryl-[protein] + ADP + H(+). It catalyses the reaction L-threonyl-[protein] + ATP = O-phospho-L-threonyl-[protein] + ADP + H(+). The sequence is that of Cysteine-rich receptor-like protein kinase 41 (CRK41) from Arabidopsis thaliana (Mouse-ear cress).